Consider the following 185-residue polypeptide: Probable prefoldin subunit 3 (185 aa).

It belongs to the prefoldin subunit alpha family. Heterohexamer of two PFD-alpha type and four PFD-beta type subunits.

Functionally, binds specifically to cytosolic chaperonin (c-CPN) and transfers target proteins to it. Binds to nascent polypeptide chain and promotes folding in an environment in which there are many competing pathways for nonnative proteins. In Caenorhabditis elegans, this protein is Probable prefoldin subunit 3 (pfd-3).